The following is a 502-amino-acid chain: ATP synthase subunit alpha (502 aa).

169-176 (GDRQTGKT) is a binding site for ATP.

This sequence belongs to the ATPase alpha/beta chains family. In terms of assembly, F-type ATPases have 2 components, CF(1) - the catalytic core - and CF(0) - the membrane proton channel. CF(1) has five subunits: alpha(3), beta(3), gamma(1), delta(1), epsilon(1). CF(0) has three main subunits: a(1), b(2) and c(9-12). The alpha and beta chains form an alternating ring which encloses part of the gamma chain. CF(1) is attached to CF(0) by a central stalk formed by the gamma and epsilon chains, while a peripheral stalk is formed by the delta and b chains. The F(1)F(0) complex interacts with SpoIIIJ and YqjG; YqgA is found in the same complex.

Its subcellular location is the cell membrane. The protein resides in the membrane raft. The catalysed reaction is ATP + H2O + 4 H(+)(in) = ADP + phosphate + 5 H(+)(out). Produces ATP from ADP in the presence of a proton gradient across the membrane. The alpha chain is a regulatory subunit. The polypeptide is ATP synthase subunit alpha (Bacillus subtilis (strain 168)).